A 779-amino-acid chain; its full sequence is Acyl-homoserine lactone acylase PvdQ (779 aa).

A signal peptide spans 1–25 (MIISRPLCSFVFAGLSFAVILPAQA). Positions 202–223 (AQQAQALQLAAARNQRFALERG) are cleaved as a propeptide — spacer peptide. Catalysis depends on serine 224, which acts as the Nucleophile. Positions 731-746 (ESSNPQSAHSSDQTEA) are enriched in polar residues. The segment at 731-750 (ESSNPQSAHSSDQTEAFSKK) is disordered.

The protein belongs to the peptidase S45 family. In terms of assembly, heterodimer of an alpha subunit and a beta subunit processed from the same precursor.

It is found in the periplasm. It catalyses the reaction an N-acyl-L-homoserine lactone + H2O = L-homoserine lactone + a carboxylate. Catalyzes the deacylation of acyl-homoserine lactone (AHL or acyl-HSL), releasing homoserine lactone (HSL) and the corresponding fatty acid. Possesses a specificity for the degradation of long-chain acyl-HSLs (side chains of 11 to 14 carbons in length). This chain is Acyl-homoserine lactone acylase PvdQ (pvdQ), found in Pseudomonas syringae pv. syringae (strain B728a).